A 492-amino-acid chain; its full sequence is Solute carrier family 2, facilitated glucose transporter member 1 (492 aa).

Position 1 is an N-acetylmethionine (Met1). Residues 1 to 11 (MEPTSKKLTGR) lie on the Cytoplasmic side of the membrane. The chain crosses the membrane as a helical span at residues 12–33 (LMLAVGGAVLGSLQFGYNTGVI). The Extracellular segment spans residues 34 to 66 (NAPQKVIEEFYNQTWVQRYGEPIPPATLTTLWS). Asn45 carries an N-linked (GlcNAc...) asparagine glycan. The helical transmembrane segment at 67–87 (LSVAIFSVGGMIGSFSVGLFV) threads the bilayer. Residues 88–90 (NRF) lie on the Cytoplasmic side of the membrane. Residues 91–112 (GRRNSMLMMNLLAFVSAVLMGF) form a helical membrane-spanning segment. The Extracellular segment spans residues 113–120 (SKLGKSFE). Residues 121–144 (MLILGRFIIGVYCGLTTGFVPMYV) form a helical membrane-spanning segment. The Cytoplasmic segment spans residues 145-155 (GEVSPTELRGA). The helical transmembrane segment at 156 to 176 (LGTLHQLGIVVGILIAQVFGL) threads the bilayer. Gln161 lines the D-glucose pocket. Residues 177–185 (DSIMGNQEL) are Extracellular-facing. Residues 186 to 206 (WPLLLSVIFIPALLQCILLPF) traverse the membrane as a helical segment. The Cytoplasmic segment spans residues 207-271 (CPESPRFLLI…LFRSAAYRQP (65 aa)). Ser226 carries the phosphoserine modification. The helical transmembrane segment at 272–293 (ILIAVVLQLSQQLSGINAVFYY) threads the bilayer. Residues 282–283 (QQ) and Asn288 each bind D-glucose. At 294 to 306 (STSIFEKAGVQQP) the chain is on the extracellular side. The helical transmembrane segment at 307–328 (VYATIGSGIVNTAFTVVSLFVV) threads the bilayer. Residue Asn317 coordinates D-glucose. The Cytoplasmic segment spans residues 329–334 (ERAGRR). A helical transmembrane segment spans residues 335 to 355 (TLHLIGLAGMAGCAVLMTIAL). Residues 356–365 (ALLERLPWMS) are Extracellular-facing. The chain crosses the membrane as a helical span at residues 366–388 (YLSIVAIFGFVAFFEVGPGPIPW). D-glucose contacts are provided by Glu380 and Trp388. Residues 389–401 (FIVAELFSQGPRP) are Cytoplasmic-facing. A helical membrane pass occupies residues 402–422 (AAIAVAGFSNWTSNFIVGMCF). Residues 423-429 (QYVEQLC) are Extracellular-facing. Residues 430 to 450 (GPYVFIIFTVLLVLFFIFTYF) traverse the membrane as a helical segment. Residues 451 to 492 (KVPETKGRTFDEIASGFRQGGASQSDKTPEELFHPLGADSQV) are Cytoplasmic-facing. The residue at position 465 (Ser465) is a Phosphoserine. Residues 468-492 (RQGGASQSDKTPEELFHPLGADSQV) form a disordered region. Thr478 is subject to Phosphothreonine. At Ser490 the chain carries Phosphoserine.

It belongs to the major facilitator superfamily. Sugar transporter (TC 2.A.1.1) family. Glucose transporter subfamily. Found in a complex with ADD2, DMTN and SLC2A1. Interacts (via C-terminus cytoplasmic region) with DMTN. Interacts with SNX27; the interaction is required when endocytosed to prevent degradation in lysosomes and promote recycling to the plasma membrane. Interacts with GIPC (via PDZ domain). Interacts with STOM. Interacts with SGTA (via Gln-rich region). Interacts with BSG. Interacts with SMIM43; the interaction may promote SLC2A1-mediated glucose transport to meet the energy needs of mesendoderm differentiation. Post-translationally, phosphorylation at Ser-226 by PKC promotes glucose uptake by increasing cell membrane localization. In terms of tissue distribution, detected in brain capillary (at protein level). Detected in brain capillary.

Its subcellular location is the cell membrane. The protein resides in the photoreceptor inner segment. It carries out the reaction D-glucose(out) = D-glucose(in). With respect to regulation, the uptake of glucose is inhibited by cytochalasin B. Glucose uptake is increased in response to phorbol ester 12-O-tetradecanoylphorbol-13-acetate (TPA) treatment: TPA-induced glucose uptake requires phosphorylation at Ser-226. Facilitative glucose transporter, which is responsible for constitutive or basal glucose uptake. Has a very broad substrate specificity; can transport a wide range of aldoses including both pentoses and hexoses. Most important energy carrier of the brain: present at the blood-brain barrier and assures the energy-independent, facilitative transport of glucose into the brain. In association with BSG and NXNL1, promotes retinal cone survival by increasing glucose uptake into photoreceptors. Required for mesendoderm differentiation. The protein is Solute carrier family 2, facilitated glucose transporter member 1 of Bos taurus (Bovine).